The chain runs to 198 residues: V-type proton ATPase subunit E (198 aa).

This sequence belongs to the V-ATPase E subunit family.

Produces ATP from ADP in the presence of a proton gradient across the membrane. The polypeptide is V-type proton ATPase subunit E (Borrelia duttonii (strain Ly)).